Here is a 259-residue protein sequence, read N- to C-terminus: Zinc import ATP-binding protein ZnuC (259 aa).

The region spanning 22-238 (VEARGLTVRR…PEYRALFGAH (217 aa)) is the ABC transporter domain. Residue 54–61 (GPNGSGKS) coordinates ATP.

The protein belongs to the ABC transporter superfamily. Zinc importer (TC 3.A.1.15.5) family. In terms of assembly, the complex is composed of two ATP-binding proteins (ZnuC), two transmembrane proteins (ZnuB) and a solute-binding protein (ZnuA).

Its subcellular location is the cell inner membrane. The enzyme catalyses Zn(2+)(out) + ATP(in) + H2O(in) = Zn(2+)(in) + ADP(in) + phosphate(in) + H(+)(in). Functionally, part of the ABC transporter complex ZnuABC involved in zinc import. Responsible for energy coupling to the transport system. This is Zinc import ATP-binding protein ZnuC from Alkalilimnicola ehrlichii (strain ATCC BAA-1101 / DSM 17681 / MLHE-1).